Reading from the N-terminus, the 87-residue chain is Defensin-like protein 175 (87 aa).

Positions Met1–Gln23 are cleaved as a signal peptide. Disulfide bonds link Cys27/Cys66, Cys36/Cys55, Cys39/Cys60, and Cys43/Cys62.

The protein belongs to the DEFL family.

Its subcellular location is the secreted. The sequence is that of Defensin-like protein 175 from Arabidopsis thaliana (Mouse-ear cress).